Reading from the N-terminus, the 389-residue chain is (S)-8-oxocitronellyl enol synthase CYC1 (389 aa).

NADP(+) contacts are provided by residues 34–36 (TGI), 62–63 (RR), 80–81 (DV), 104–105 (AW), and Gln-138. Catalysis depends on residues Lys-142 and Tyr-174. Substrate is bound by residues Lys-142 and Tyr-174. NADP(+) is bound by residues Tyr-174, Val-201, and 208–210 (SMM). Residue Ser-350 coordinates substrate.

It belongs to the short-chain dehydrogenases/reductases (SDR) family. Highly divergent.

The catalysed reaction is (S)-8-oxocitronellyl enol + NADP(+) = (6E)-8-oxogeranial + NADPH + H(+). It carries out the reaction (S)-8-oxocitronellyl enol + NAD(+) = (6E)-8-oxogeranial + NADH + H(+). Iridoid synthase that catalyzes the first step in generation of the iridoid ring scaffold using the linear monoterpene (6E)-8-oxogeranial as substrate. Iridoids comprise a large family of distinctive bicyclic monoterpenes that possess a wide range of pharmacological activities, including anticancer, anti-inflammatory, antifungal and antibacterial activities. The polypeptide is (S)-8-oxocitronellyl enol synthase CYC1 (Camptotheca acuminata (Happy tree)).